We begin with the raw amino-acid sequence, 849 residues long: MPLLSKCFPCFKFKREEVIDKLDYSNTPLTDFPEVWQHERTLEELYLSTTRLQALPPQLFYCQGLRVLHVNSNNLESIPQAIGSLRQLQHLDLNRNLIVNVPEEIKSCKHLTHLDLSCNSLQRLPDAITSLISLQELLLNETYLEFLPANFGRLVNLRILELRLNNLMTLPKSMVRLINLQRLDIGGNEFTELPEVVGELKSLRELWIDFNQIRRVSANIGKLRDLQHFEANGNLLDTLPSELSNWRNVEVLSICSNSLEAFPFSVGMLKSLVTFKCESNGLTELPDSISYLEQLEELVLSHNKLIRLPSTIGMLRSLRFLFADDNQLRQLPDELCSCQQLSVLSVANNQLSALPQNIGNLSKMKVLNVVNNYINALPVSMLNLVNLTSMWLSDNQSQPLVPLQYLDASTKTQLTCFMLPQVTFKMNSIQAQQQAQEQYEFVYANQQQPHASPSRRICFAEEATILSNAKAQPAPNYPSFVAAPPTPTPDQMAGSVRLMRSPTPYPKELRQMSKYVRQAQAATSSANASEVREARVVTNGQIHCDSNNANQDVVDQATTSAIYGIAPETTHIYGVYQQPQQMAHPVPTQEYYGLPLVNYEAHYQQLYVEANTPLPTTHLNGDQDYELQPLQQQPMQQQALPTPRLEPPPYHIARVYTKKTPEDLNLYESMRQRKQQQQLQEQTIYQDALNSNSNFKTTAIGAQDVEESVDQLDYQNNISNNLEPNPEEEDQELDDTMSQHSLNSTATNNTSKASHKKSTWIFGVHKNPTVKQVTLKWENSIGFDIAELLNQVGIFVSSITPNTNAARLLNLNDKLLEIDGYDLTNANLSDAKRVLLNCGTVMNIMLSRK.

LRR repeat units follow at residues 18 to 39, 41 to 62, 64 to 85, 87 to 108, 110 to 131, 133 to 155, 156 to 177, 179 to 200, 202 to 224, 225 to 246, 248 to 269, 271 to 292, 294 to 315, 317 to 338, 340 to 362, 363 to 384, and 386 to 407; these read VIDK…WQHE, TLEE…LFYC, GLRV…IGSL, QLQH…IKSC, HLTH…ITSL, SLQE…GRLV, NLRI…MVRL, NLQR…VGEL, SLRE…GKLR, DLQH…LSNW, NVEV…VGML, SLVT…ISYL, QLEE…IGML, SLRF…LCSC, QLSV…GNLS, KMKV…MLNL, and NLTS…QYLD. The interval 716–752 is disordered; the sequence is NNISNNLEPNPEEEDQELDDTMSQHSLNSTATNNTSK. Residues 725–735 show a composition bias toward acidic residues; the sequence is NPEEEDQELDD. The span at 736-752 shows a compositional bias: polar residues; it reads TMSQHSLNSTATNNTSK. The PDZ domain maps to 770-849; the sequence is VKQVTLKWEN…TVMNIMLSRK (80 aa).

This sequence belongs to the LAP (LRR and PDZ) protein family.

Functionally, may have a role in assembling adherens junctions. The sequence is that of Protein lap1 from Drosophila melanogaster (Fruit fly).